The primary structure comprises 170 residues: Adenine phosphoribosyltransferase (170 aa).

It belongs to the purine/pyrimidine phosphoribosyltransferase family. As to quaternary structure, homodimer.

The protein resides in the cytoplasm. The enzyme catalyses AMP + diphosphate = 5-phospho-alpha-D-ribose 1-diphosphate + adenine. Its pathway is purine metabolism; AMP biosynthesis via salvage pathway; AMP from adenine: step 1/1. In terms of biological role, catalyzes a salvage reaction resulting in the formation of AMP, that is energically less costly than de novo synthesis. This chain is Adenine phosphoribosyltransferase, found in Lactococcus lactis subsp. cremoris (strain SK11).